The following is a 183-amino-acid chain: Beta-defensin 129 (183 aa).

The signal sequence occupies residues 1-19; that stretch reads MKLLFPIFASLMLQYQVNT. 3 disulfide bridges follow: Cys27/Cys53, Cys34/Cys48, and Cys38/Cys54. A disordered region spans residues 142 to 183; sequence ATSAKSNTKESGDSATASPPPAPPPPNILPTPSLELEEAEEQ. Pro residues predominate over residues 159–170; it reads SPPPAPPPPNIL.

This sequence belongs to the beta-defensin family.

It is found in the secreted. Its function is as follows. Has antibacterial activity. This chain is Beta-defensin 129 (DEFB129), found in Macaca fascicularis (Crab-eating macaque).